The following is a 206-amino-acid chain: Nucleoside triphosphate pyrophosphatase (206 aa).

Catalysis depends on Asp-71, which acts as the Proton acceptor.

It belongs to the Maf family. A divalent metal cation serves as cofactor.

The protein resides in the cytoplasm. It carries out the reaction a ribonucleoside 5'-triphosphate + H2O = a ribonucleoside 5'-phosphate + diphosphate + H(+). The enzyme catalyses a 2'-deoxyribonucleoside 5'-triphosphate + H2O = a 2'-deoxyribonucleoside 5'-phosphate + diphosphate + H(+). Functionally, nucleoside triphosphate pyrophosphatase. May have a dual role in cell division arrest and in preventing the incorporation of modified nucleotides into cellular nucleic acids. In Rippkaea orientalis (strain PCC 8801 / RF-1) (Cyanothece sp. (strain PCC 8801)), this protein is Nucleoside triphosphate pyrophosphatase.